Consider the following 355-residue polypeptide: MAKFECTDEVTNFLTELPKCEHHLHLEGTLEPELLFQLVERNGVQLPGTFPKTVNELHVIYNNFADLQDFLNYYYIGCNVLLSEDDFFELAWSYFKRVSTQGLRHAEVFYDPQSHTSRGISLEVVTKGFERACAKAQEEFNISTKLIMCLLRHCPVEECMDTVKSAKSLIESGVIDGLGLDSSERPFPPELFVECYQLAKSYNKELQLTAHAGEEGDPSFVTNTLDLLETTRIDHGVRSIEDAELIKRLAAQKVMLTLCPLSNVKLQVVKDVSELPLQEFLDNDVPFSINSDDPAYFGGYILQNYLEVYSRFGWSKAVWAKIARQSIEGSWCDPKRKQELLSEVSEVVNKYVNLP.

His23, His25, and His211 together coordinate Zn(2+). Glu214 functions as the Proton donor in the catalytic mechanism. Asp292 provides a ligand contact to Zn(2+). A substrate-binding site is contributed by Asp293.

This sequence belongs to the metallo-dependent hydrolases superfamily. Adenosine and AMP deaminases family. Adenine deaminase type 2 subfamily. Requires Zn(2+) as cofactor.

The protein resides in the cytoplasm. It is found in the nucleus. It catalyses the reaction adenine + H2O + H(+) = hypoxanthine + NH4(+). Catalyzes the hydrolytic deamination of adenine to hypoxanthine. Plays an important role in the purine salvage pathway and in nitrogen catabolism. The polypeptide is Adenine deaminase (Kluyveromyces lactis (strain ATCC 8585 / CBS 2359 / DSM 70799 / NBRC 1267 / NRRL Y-1140 / WM37) (Yeast)).